The sequence spans 776 residues: MATLGVPRIGRRRELKFALESYWSGKSPAADLLATAKALRAASWREQHDRGVSKIPSNDFSLYDHVLDTVAMVGAVPARYTWTDGEVPLDTYFAMARGNQDQAADCGHAGDEHAANGHGLAAMEMTKWFDTNYHYIVPELTDDQSFALSSAKPVDHFLEAKALGIHTRPVLLGPVTFLKLAKSPEEGFNPIALLPRLLPVYEELLRRLKLAGADWVQIDEPALVVDLVPNERDALQFAYCRLSKAAPELKIMVAIYFGSLGDNLETAISLPVAGLHVDLVRAPEQLETVGRLAQKDLVLSLGLIDGRNVWRANLPAILDRIKPIVAGWPLDRVEIAPSCSMLHVPIDLDMETALDADVKSWLAFAAQKTDELVVLARALAEGRDAVAAELEASAEAAAARATSAKVHDPLVEGRVASIKVAMTRRKSAFDVRSKLQGDTFGLPSFPTTTIGSFPQTAEVRKARAAHAKGELSYVDYEAFLKKEIEAAVRWQEEIGLDVLVHGEFERNDMVQYFAEQLRGFAFTQHGWVQSYGSRFVRPPIIIGDVSRQNPMTLHWWRYAQSLTPKPVKGMLTGPVTILNWSFVRDDLPRSAVCRQVALAIRDEVSDLEKAGAKMIQIDEAALREGLPLREADWQAYLDWAVECFRLASTAVGDATQIHTHMCYSEFGDIVDAIAAMDADVISIETSRSQLELLDTLRTFKYPNEIGPGVYDIHSPRVPEVGEISNLIMLARKRLSDGQLWVNPDCGLKTRRWEEVRPALVNMVAAARAIRQKAQTA.

5-methyltetrahydropteroyltri-L-glutamate contacts are provided by residues 13-16 and K127; that span reads RELK. L-homocysteine-binding positions include 450-452 and E503; that span reads IGS. L-methionine is bound by residues 450–452 and E503; that span reads IGS. W580 serves as a coordination point for 5-methyltetrahydropteroyltri-L-glutamate. D618 serves as a coordination point for L-homocysteine. Residue D618 participates in L-methionine binding. E624 contributes to the 5-methyltetrahydropteroyltri-L-glutamate binding site. 3 residues coordinate Zn(2+): H660, C662, and E684. Residue H713 is the Proton donor of the active site. C745 serves as a coordination point for Zn(2+).

The protein belongs to the vitamin-B12 independent methionine synthase family. It depends on Zn(2+) as a cofactor.

It catalyses the reaction 5-methyltetrahydropteroyltri-L-glutamate + L-homocysteine = tetrahydropteroyltri-L-glutamate + L-methionine. It participates in amino-acid biosynthesis; L-methionine biosynthesis via de novo pathway; L-methionine from L-homocysteine (MetE route): step 1/1. Functionally, catalyzes the transfer of a methyl group from 5-methyltetrahydrofolate to homocysteine resulting in methionine formation. This chain is 5-methyltetrahydropteroyltriglutamate--homocysteine methyltransferase, found in Mesorhizobium japonicum (strain LMG 29417 / CECT 9101 / MAFF 303099) (Mesorhizobium loti (strain MAFF 303099)).